A 511-amino-acid polypeptide reads, in one-letter code: Cytochrome P450 89A9 (511 aa).

A helical; Signal-anchor for type II membrane protein transmembrane segment spans residues 6 to 26 (IIFLIISSLTFSIFLKLIFFF). Heme is bound at residue cysteine 454.

This sequence belongs to the cytochrome P450 family. It depends on heme as a cofactor.

Its subcellular location is the endoplasmic reticulum membrane. The catalysed reaction is primary fluorescent chlorophyll catabolite + reduced [NADPH--hemoprotein reductase] + O2 = primary fluorescent dioxobilin-type chlorophyll catabolite + formate + oxidized [NADPH--hemoprotein reductase] + 2 H(+). It functions in the pathway porphyrin-containing compound metabolism; chlorophyll degradation. Its function is as follows. Involved in the chlorophyll breakdown by its action in nonpolar primary fluorescent chlorophyll catabolite (pFCC) decarbonylation. Involved in the formation of major chlorophyll breakdown products, including non-fluorescent dioxobilin-type chlorophyll catabolites (NDCCs), during leaf senescence. The sequence is that of Cytochrome P450 89A9 from Arabidopsis thaliana (Mouse-ear cress).